Consider the following 193-residue polypeptide: RNA polymerase sigma-H factor (193 aa).

Residues 49-62 (DVAQEAFIKAYRAL) carry the Polymerase core binding motif. The H-T-H motif DNA-binding region spans 157-176 (YEDIATVMQCPVGTVRSRIF).

The protein belongs to the sigma-70 factor family. ECF subfamily.

Its function is as follows. Sigma factors are initiation factors that promote the attachment of RNA polymerase to specific initiation sites and are then released. This sigma factor regulates genes such as algD, involved in alginate biosynthesis. This is RNA polymerase sigma-H factor (algU) from Pseudomonas aeruginosa (strain ATCC 15692 / DSM 22644 / CIP 104116 / JCM 14847 / LMG 12228 / 1C / PRS 101 / PAO1).